A 1079-amino-acid chain; its full sequence is Ubiquitin carboxyl-terminal hydrolase 26 (1079 aa).

Over residues 1–12 the composition is skewed to basic residues; the sequence is MSRPNTRNKSKR. Positions 1–21 are disordered; that stretch reads MSRPNTRNKSKRPRADDCESP. Residues 106-446 enclose the USP domain; it reads AGLTNLGATC…DAYMLMYKRI (341 aa). The active-site Nucleophile is the Cys115. Residue His359 is the Proton acceptor of the active site. Positions 384-419 are disordered; that stretch reads GLHPFGEKPGKSSDKTDQKPQGSSTADSVTNDDNNS. Residues 388-401 show a composition bias toward basic and acidic residues; it reads FGEKPGKSSDKTDQ. Polar residues predominate over residues 402-417; the sequence is KPQGSSTADSVTNDDN. DUSP domains are found at residues 495 to 598, 613 to 715, and 738 to 862; these read AYIT…DDFC, DVYR…FPSD, and AVKL…AEIV. The disordered stretch occupies residues 948 to 972; it reads EASAAVPVPDRRTSKRSRRTTSGNS. A Ubiquitin-like domain is found at 961–1037; that stretch reads SKRSRRTTSG…LWVKDSEIYE (77 aa).

It belongs to the peptidase C19 family.

It localises to the nucleus. It carries out the reaction Thiol-dependent hydrolysis of ester, thioester, amide, peptide and isopeptide bonds formed by the C-terminal Gly of ubiquitin (a 76-residue protein attached to proteins as an intracellular targeting signal).. In terms of biological role, recognizes and hydrolyzes the peptide bond at the C-terminal Gly of ubiquitin. Involved in the processing of poly-ubiquitin precursors as well as that of ubiquitinated proteins. Deubiquitinates H2BK143ub1 of histone H2B. The sequence is that of Ubiquitin carboxyl-terminal hydrolase 26 (UBP26) from Oryza sativa subsp. japonica (Rice).